A 291-amino-acid chain; its full sequence is Acetyl-coenzyme A carboxylase carboxyl transferase subunit beta (291 aa).

The 256-residue stretch at 36 to 291 folds into the CoA carboxyltransferase N-terminal domain; sequence MWVKCDGCGK…KILVIHGRGN (256 aa). Cysteine 40, cysteine 43, cysteine 59, and cysteine 62 together coordinate Zn(2+). Residues 40 to 62 form a C4-type zinc finger; that stretch reads CDGCGKVLYKNDMEKNNKVCYHC.

The protein belongs to the AccD/PCCB family. In terms of assembly, acetyl-CoA carboxylase is a heterohexamer composed of biotin carboxyl carrier protein (AccB), biotin carboxylase (AccC) and two subunits each of ACCase subunit alpha (AccA) and ACCase subunit beta (AccD). Zn(2+) serves as cofactor.

It localises to the cytoplasm. The enzyme catalyses N(6)-carboxybiotinyl-L-lysyl-[protein] + acetyl-CoA = N(6)-biotinyl-L-lysyl-[protein] + malonyl-CoA. It participates in lipid metabolism; malonyl-CoA biosynthesis; malonyl-CoA from acetyl-CoA: step 1/1. Functionally, component of the acetyl coenzyme A carboxylase (ACC) complex. Biotin carboxylase (BC) catalyzes the carboxylation of biotin on its carrier protein (BCCP) and then the CO(2) group is transferred by the transcarboxylase to acetyl-CoA to form malonyl-CoA. The sequence is that of Acetyl-coenzyme A carboxylase carboxyl transferase subunit beta from Clostridium kluyveri (strain NBRC 12016).